The following is a 475-amino-acid chain: Ribulose bisphosphate carboxylase large chain (475 aa).

The propeptide occupies Met-1–Ser-2. An N-acetylproline modification is found at Pro-3. At Lys-14 the chain carries N6,N6,N6-trimethyllysine. Substrate-binding residues include Asn-123 and Thr-173. Lys-175 (proton acceptor) is an active-site residue. Lys-177 is a substrate binding site. The Mg(2+) site is built by Lys-201, Asp-203, and Glu-204. The residue at position 201 (Lys-201) is an N6-carboxylysine. Catalysis depends on His-294, which acts as the Proton acceptor. Positions 295, 327, and 379 each coordinate substrate.

Belongs to the RuBisCO large chain family. Type I subfamily. In terms of assembly, heterohexadecamer of 8 large chains and 8 small chains; disulfide-linked. The disulfide link is formed within the large subunit homodimers. Requires Mg(2+) as cofactor. The disulfide bond which can form in the large chain dimeric partners within the hexadecamer appears to be associated with oxidative stress and protein turnover.

It is found in the plastid. It localises to the chloroplast. It catalyses the reaction 2 (2R)-3-phosphoglycerate + 2 H(+) = D-ribulose 1,5-bisphosphate + CO2 + H2O. The enzyme catalyses D-ribulose 1,5-bisphosphate + O2 = 2-phosphoglycolate + (2R)-3-phosphoglycerate + 2 H(+). Functionally, ruBisCO catalyzes two reactions: the carboxylation of D-ribulose 1,5-bisphosphate, the primary event in carbon dioxide fixation, as well as the oxidative fragmentation of the pentose substrate in the photorespiration process. Both reactions occur simultaneously and in competition at the same active site. This is Ribulose bisphosphate carboxylase large chain from Anthoceros angustus (Hornwort).